An 80-amino-acid chain; its full sequence is Regulatory protein HrpD6 (80 aa).

Functionally, involved in the regulation of several genes of the hrp-hrc-hpa cluster, which encodes a type III secretion system (T3SS). Upregulates the expression of hpa2, hpa1 and hpaB and partially controls the expression of hrcC and hrcT. Controls the secretion of the T3SS TAL effector AvrXa27. Also regulates the expression of several HrpX-regulated protein (Xrp) genes. Has no influence on hrpG or hrpX expression. The polypeptide is Regulatory protein HrpD6 (Xanthomonas oryzae pv. oryzicola).